Reading from the N-terminus, the 164-residue chain is Nucleotide-binding protein Emin_0136 (164 aa).

Belongs to the YajQ family.

Nucleotide-binding protein. The sequence is that of Nucleotide-binding protein Emin_0136 from Elusimicrobium minutum (strain Pei191).